Consider the following 227-residue polypeptide: MAYPFQLGFQDATSPIMEELLHFHDHTLMIVFLISSLVLYIISLMLTTKLTHTSTMDAQEVETIWTILPAIILILIALPSLRILYMMDEINNPSLTVKTMGHQWYWSYEYTDYEDLNFDSYMIPTQELKPGELRLLEVDNRVVLPMEMTIRMLISSEDVLHSWAVPSLGLKTDAIPGRLNQTTLMATRPGLYYGQCSEICGSNHSFMPIVLELVPLTYFEKWSASML.

Over 1 to 14 (MAYPFQLGFQDATS) the chain is Mitochondrial intermembrane. The helical transmembrane segment at 15 to 45 (PIMEELLHFHDHTLMIVFLISSLVLYIISLM) threads the bilayer. Over 46 to 59 (LTTKLTHTSTMDAQ) the chain is Mitochondrial matrix. A helical membrane pass occupies residues 60 to 87 (EVETIWTILPAIILILIALPSLRILYMM). At 88–227 (DEINNPSLTV…YFEKWSASML (140 aa)) the chain is on the mitochondrial intermembrane side. 6 residues coordinate Cu cation: His161, Cys196, Glu198, Cys200, His204, and Met207. Glu198 lines the Mg(2+) pocket. Residue Tyr218 is modified to Phosphotyrosine.

The protein belongs to the cytochrome c oxidase subunit 2 family. In terms of assembly, component of the cytochrome c oxidase (complex IV, CIV), a multisubunit enzyme composed of 14 subunits. The complex is composed of a catalytic core of 3 subunits MT-CO1, MT-CO2 and MT-CO3, encoded in the mitochondrial DNA, and 11 supernumerary subunits COX4I, COX5A, COX5B, COX6A, COX6B, COX6C, COX7A, COX7B, COX7C, COX8 and NDUFA4, which are encoded in the nuclear genome. The complex exists as a monomer or a dimer and forms supercomplexes (SCs) in the inner mitochondrial membrane with NADH-ubiquinone oxidoreductase (complex I, CI) and ubiquinol-cytochrome c oxidoreductase (cytochrome b-c1 complex, complex III, CIII), resulting in different assemblies (supercomplex SCI(1)III(2)IV(1) and megacomplex MCI(2)III(2)IV(2)). Found in a complex with TMEM177, COA6, COX18, COX20, SCO1 and SCO2. Interacts with TMEM177 in a COX20-dependent manner. Interacts with COX20. Interacts with COX16. Requires Cu cation as cofactor.

The protein resides in the mitochondrion inner membrane. The enzyme catalyses 4 Fe(II)-[cytochrome c] + O2 + 8 H(+)(in) = 4 Fe(III)-[cytochrome c] + 2 H2O + 4 H(+)(out). Component of the cytochrome c oxidase, the last enzyme in the mitochondrial electron transport chain which drives oxidative phosphorylation. The respiratory chain contains 3 multisubunit complexes succinate dehydrogenase (complex II, CII), ubiquinol-cytochrome c oxidoreductase (cytochrome b-c1 complex, complex III, CIII) and cytochrome c oxidase (complex IV, CIV), that cooperate to transfer electrons derived from NADH and succinate to molecular oxygen, creating an electrochemical gradient over the inner membrane that drives transmembrane transport and the ATP synthase. Cytochrome c oxidase is the component of the respiratory chain that catalyzes the reduction of oxygen to water. Electrons originating from reduced cytochrome c in the intermembrane space (IMS) are transferred via the dinuclear copper A center (CU(A)) of subunit 2 and heme A of subunit 1 to the active site in subunit 1, a binuclear center (BNC) formed by heme A3 and copper B (CU(B)). The BNC reduces molecular oxygen to 2 water molecules using 4 electrons from cytochrome c in the IMS and 4 protons from the mitochondrial matrix. In Felis catus (Cat), this protein is Cytochrome c oxidase subunit 2 (MT-CO2).